The sequence spans 507 residues: Histidine ammonia-lyase (507 aa).

A cross-link (5-imidazolinone (Ala-Gly)) is located at residues 141-143 (ASG). S142 carries the 2,3-didehydroalanine (Ser) modification.

The protein belongs to the PAL/histidase family. Post-translationally, contains an active site 4-methylidene-imidazol-5-one (MIO), which is formed autocatalytically by cyclization and dehydration of residues Ala-Ser-Gly.

It is found in the cytoplasm. It catalyses the reaction L-histidine = trans-urocanate + NH4(+). It participates in amino-acid degradation; L-histidine degradation into L-glutamate; N-formimidoyl-L-glutamate from L-histidine: step 1/3. The sequence is that of Histidine ammonia-lyase from Burkholderia cenocepacia (strain HI2424).